A 927-amino-acid chain; its full sequence is BTB/POZ domain-containing protein KCTD19 (927 aa).

A BTB 1 domain is found at N18–T72. A Phosphoserine modification is found at S270. One can recognise a BTB 2 domain in the interval I399 to L486. Positions V664–A760 are disordered. The segment covering D731–P743 has biased composition (basic and acidic residues).

Identified in a complex with ZNF541, HDAC1 and HSPA2. Identified in a complex with ZNF541 and HDAC1. Identified in a complex with HDAC1, HDAC2, DNTTIP1 and ZNF541. As to expression, detected in adult testis.

It localises to the nucleus. Functionally, transcription regulator which is essential for male fertility and for the completion of meiotic prophase in spermatocytes. Regulates progression of the pachytene stage of meiotic prophase and promotes the transcriptional activation activity ZNF541. Required for the organization of chromosomes during metaphase I. In Mus musculus (Mouse), this protein is BTB/POZ domain-containing protein KCTD19 (Kctd19).